A 550-amino-acid chain; its full sequence is O-phosphoserine--tRNA(Cys) ligase (550 aa).

The tract at residues 1–32 (MRFNPQDWKEKSHTNFEGAWHDGPSVITPPGE) is disordered. Substrate-binding positions include 212 to 214 (HMT), 257 to 259 (SAS), 299 to 300 (YY), and asparagine 342.

Belongs to the class-II aminoacyl-tRNA synthetase family. O-phosphoseryl-tRNA(Cys) synthetase subfamily. Homotetramer. Interacts with SepCysS.

It carries out the reaction tRNA(Cys) + O-phospho-L-serine + ATP = O-phospho-L-seryl-tRNA(Cys) + AMP + diphosphate. Its function is as follows. Catalyzes the attachment of O-phosphoserine (Sep) to tRNA(Cys). The protein is O-phosphoserine--tRNA(Cys) ligase of Methanoregula boonei (strain DSM 21154 / JCM 14090 / 6A8).